Consider the following 645-residue polypeptide: Sentrin-specific protease 1 (645 aa).

The segment at 1–200 (MDDIADRMRM…REIYRQLLQM (200 aa)) is interaction with CCAR2. 3 positions are modified to phosphoserine: Ser57, Ser117, and Ser157. The tract at residues 92-117 (QSANGQWRNSTPSSSSSLQKSRNSRS) is disordered. A compositionally biased stretch (low complexity) spans 99–117 (RNSTPSSSSSLQKSRNSRS). Residues 171 to 177 (PKKTQRR) carry the Nuclear localization signal motif. Residues 285-313 (KDSGTLHHPHHHHSVPHQPDNLAASNTQS) are disordered. 2 protease regions span residues 451 to 614 (LTIT…YADC) and 451 to 615 (LTIT…ADCI). Catalysis depends on residues His534 and Asp551. Residues 575 to 578 (KKRK) carry the Nuclear localization signal motif. Cys604 acts as the Nucleophile in catalysis. The Nuclear localization signal signature appears at 629-635 (PYFRKRM). The Nuclear export signal signature appears at 636 to 645 (VWEILHRKLL).

The protein belongs to the peptidase C48 family. As to quaternary structure, interacts with RBM33; promoting ALKBH5 desumoylation and subsequent activation.

The protein resides in the nucleus. It localises to the cytoplasm. In terms of biological role, protease that catalyzes two essential functions in the SUMO pathway. The first is the hydrolysis of an alpha-linked peptide bond at the C-terminal end of the small ubiquitin-like modifier (SUMO) propeptides, SUMO1, SUMO2 and SUMO3 leading to the mature form of the proteins. The second is the deconjugation of SUMO1, SUMO2 and SUMO3 from targeted proteins, by cleaving an epsilon-linked peptide bond between the C-terminal glycine of the mature SUMO and the lysine epsilon-amino group of the target protein. Deconjugates SUMO1 from HIPK2. Deconjugates SUMO1 from HDAC1 and BHLHE40/DEC1, which decreases its transcriptional repression activity. Deconjugates SUMO1 from CLOCK, which decreases its transcriptional activation activity. Deconjugates SUMO2 from MTA1. Inhibits N(6)-methyladenosine (m6A) RNA methylation by mediating SUMO1 deconjugation from METTL3 and ALKBH5: METTL3 inhibits the m6A RNA methyltransferase activity, while ALKBH5 desumoylation promotes m6A demethylation. Desumoylates CCAR2 which decreases its interaction with SIRT1. Deconjugates SUMO1 from GPS2. The chain is Sentrin-specific protease 1 (SENP1) from Pongo abelii (Sumatran orangutan).